Reading from the N-terminus, the 1090-residue chain is Protein CHROMATIN REMODELING 24 (1090 aa).

Disordered regions lie at residues Met1 to Leu51 and Val247 to Arg273. Positions Thr44–Leu51 match the Nuclear localization signal motif. The segment covering Arg256–Arg273 has biased composition (basic and acidic residues). The Helicase ATP-binding domain occupies Trp389 to Gly564. Asp402–Thr409 provides a ligand contact to ATP. Residues Asp515–His518 carry the DEAH box motif. A Helicase C-terminal domain is found at Phe736–Arg895. Positions Asp1043–Asn1069 form a coiled coil.

The protein belongs to the SNF2/RAD54 helicase family.

It is found in the nucleus. In terms of biological role, DNA helicase that acts as an essential component of the spindle assembly checkpoint. Probable chromatin remodeling factor that regulate homologous recombination (HR) and non-homologous recombination (NHR). This is Protein CHROMATIN REMODELING 24 from Arabidopsis thaliana (Mouse-ear cress).